Here is a 541-residue protein sequence, read N- to C-terminus: Atlastin-3 (541 aa).

Residues 1–22 (MLSPQRTAAVASRGAGDAMENG) form a disordered region. The segment at 1–25 (MLSPQRTAAVASRGAGDAMENGKPG) is N-terminal hypervariable region (HVR). Over 1 to 445 (MLSPQRTAAV…NVFSTFRTPA (445 aa)) the chain is Cytoplasmic. Residues 57–306 (DLDVVVVSVA…LIPYVLNPSK (250 aa)) enclose the GB1/RHD3-type G domain. Arg-70, Lys-71, Gly-72, Lys-73, Ser-74, Phe-75, and Arg-109 together coordinate GDP. Asp-142 is a Mg(2+) binding site. 4 residues coordinate GDP: Arg-213, Asp-214, Val-272, and Ser-275. Residues 344–434 (MLQATAANNL…YENFCKHNGS (91 aa)) are 3HB (three-helix bundle) domain. Residue Lys-391 is modified to N6-acetyllysine. A helical membrane pass occupies residues 446–466 (VLFTGIAVLYIASGLTGFIGL). Position 467 (Glu-467) is a topological domain, lumenal. Residues 468–488 (VVAQLFNCMVGLLLIALLTWG) form a helical membrane-spanning segment. Over 489-541 (YIRYSGQYLELGGAIDSGAAYVLEQASSHIGNSTQAAVRDAIAGRPPADKKSQ) the chain is Cytoplasmic.

The protein belongs to the TRAFAC class dynamin-like GTPase superfamily. GB1/RHD3 GTPase family. GB1 subfamily. Monomeric and homodimeric. The homodimer, transiently formed by two molecules on opposing membranes, is the active form mediating ER membrane fusion. Interacts with ZFYVE27; both proteins are involved in endoplasmic reticulum tubular network organization. Interacts with REEP5; both proteins are involved in endoplasmic reticulum tubular network organization.

It localises to the endoplasmic reticulum membrane. It catalyses the reaction GTP + H2O = GDP + phosphate + H(+). Atlastin-3 (ATL3) is a membrane-anchored GTPase that mediates the GTP-dependent fusion of endoplasmic reticulum (ER) membranes, maintaining the continuous ER network. It facilitates the formation of three-way junctions where ER tubules intersect. Two atlastin-3 on neighboring ER tubules bind GTP and form loose homodimers through the GB1/RHD3-type G domains and 3HB regions. Upon GTP hydrolysis, the 3HB regions tighten, pulling the membranes together to drive their fusion. After fusion, the homodimer disassembles upon release of inorganic phosphate (Pi). Subsequently, GDP dissociates, resetting the monomers to a conformation ready for a new fusion cycle. The protein is Atlastin-3 of Rattus norvegicus (Rat).